The chain runs to 524 residues: Inorganic phosphate transporter 1-1 (524 aa).

Residues 1–24 (MAEQQLGVLKALDVAKTQLYHFTA) lie on the Cytoplasmic side of the membrane. A helical transmembrane segment spans residues 25–45 (IVIAGMGFFTDAYDLFCVSLV). The Extracellular portion of the chain corresponds to 46–70 (TKLLGRIYYFNPESAKPGSLPPHVA). A helical membrane pass occupies residues 71 to 91 (AAVNGVALCGTLSGQLFFGWL). The Cytoplasmic segment spans residues 92–99 (GDKLGRKK). Residues 100–120 (VYGLTLVMMILCSVASGLSFG) form a helical membrane-spanning segment. The Extracellular segment spans residues 121 to 131 (HEAKGVMTTLC). Residues 132 to 152 (FFRFWLGFGIGGDYPLSATIM) form a helical membrane-spanning segment. The Cytoplasmic portion of the chain corresponds to 153-161 (SEYANKKTR). The helical transmembrane segment at 162–182 (GAFIAAVFAMQGVGILAGGFV) threads the bilayer. At 183–211 (ALAVSSIFDKKFPAPTYAVNRALSTPPQV) the chain is on the extracellular side. The chain crosses the membrane as a helical span at residues 212–232 (DYIWRIIVMFGALPAALTYYW). The Cytoplasmic segment spans residues 233-292 (RMKMPETARYTALVAKNIKQATADMSKVLQTDIELEERVEDDVKDPKQNYGLFSKEFLRR). The chain crosses the membrane as a helical span at residues 293–313 (HGLHLLGTTSTWFLLDIAFYS). Over 314–348 (QNLFQKDIFSAIGWIPKAATMNATHEVFRIARAQT) the chain is Extracellular. A helical membrane pass occupies residues 349–369 (LIALCSTVPGYWFTVAFIDTI). At 370–371 (GR) the chain is on the cytoplasmic side. A helical membrane pass occupies residues 372-392 (FKIQLNGFFMMTVFMFAIAFP). The Extracellular segment spans residues 393–402 (YNHWIKPENR). The chain crosses the membrane as a helical span at residues 403 to 423 (IGFVVMYSLTFFFANFGPNAT). Residues 424–441 (TFIVPAEIFPARLRSTCH) are Cytoplasmic-facing. Residues 442–462 (GISAAAGKAGAIVGAFGFLYA) form a helical membrane-spanning segment. Topologically, residues 463 to 484 (AQSQDKAKVDAGYPPGIGVKNS) are extracellular. A helical membrane pass occupies residues 485–505 (LIMLGVLNFIGMLFTFLVPEP). The Cytoplasmic portion of the chain corresponds to 506–524 (KGKSLEELSGEAEVSHDEK).

This sequence belongs to the major facilitator superfamily. Phosphate:H(+) symporter (TC 2.A.1.9) family. As to quaternary structure, interacts with NLA. Post-translationally, ubiquitinated by NLA. Ubiquitination of PHT1-1 leads to its degradation by the proteasome. As to expression, mostly expressed in roots, especially in trichoblasts and in emerging secondary roots and root hairs, but not in root tips. Also present in hydathodes, axillary buds and peripheral endosperm of germinating seeds.

It localises to the cell membrane. With respect to regulation, inhibited by protonophores (e.g. 2,4-dinitrophenol and carbonylcyanide m-chlorophenylhydrazone), the plasma membrane H(+)-ATPase inhibitor diethylstilbestorol, and the phosphate analog arsenate. In terms of biological role, high-affinity transporter for external inorganic phosphate. Acts as a H(+):phosphate symporter in both low- and high-Pi conditions. Confers sensitivity to arsenate. The sequence is that of Inorganic phosphate transporter 1-1 (PHT1-1) from Arabidopsis thaliana (Mouse-ear cress).